A 220-amino-acid polypeptide reads, in one-letter code: MHLSSPALPIGGFSYSQGLEAAIELGLVHDEASTLAWIESQLVTVMARAEAPLWCLLFEAWRAGDDAAAHGWNQWFHASRETRELRQETEQMGRSLARLAQELGWGTAATRAAVAALRPATLPAVHACACAMWALPREAGLGAYVFSWLENQVAAAIKGVPLGQMAGQRMLERLRAGLPAVLADARARAGATPPRLDTFAPQYALVSARHETQFSRLFRS.

This sequence belongs to the UreF family. As to quaternary structure, ureD, UreF and UreG form a complex that acts as a GTP-hydrolysis-dependent molecular chaperone, activating the urease apoprotein by helping to assemble the nickel containing metallocenter of UreC. The UreE protein probably delivers the nickel.

It localises to the cytoplasm. Its function is as follows. Required for maturation of urease via the functional incorporation of the urease nickel metallocenter. The protein is Urease accessory protein UreF of Bordetella parapertussis (strain 12822 / ATCC BAA-587 / NCTC 13253).